A 137-amino-acid chain; its full sequence is Competence protein D (137 aa).

Involved in transformation (genetic competence for DNA uptake). The chain is Competence protein D (comD) from Haemophilus influenzae (strain ATCC 51907 / DSM 11121 / KW20 / Rd).